A 500-amino-acid polypeptide reads, in one-letter code: Probable serine carboxypeptidase CPVL (500 aa).

The first 23 residues, 1–23, serve as a signal peptide directing secretion; it reads MKVSLSFLLTILIVIITIKVNLS. N-linked (GlcNAc...) asparagine glycosylation is found at Asn-110 and Asn-161. Residue Ser-233 is part of the active site. N-linked (GlcNAc...) asparagine glycans are attached at residues Asn-333 and Asn-360. Active-site residues include Asp-414 and His-474.

It belongs to the peptidase S10 family.

The protein resides in the secreted. Its function is as follows. May be involved in the digestion of phagocytosed particles in the lysosome, participation in an inflammatory protease cascade, and trimming of peptides for antigen presentation. This is Probable serine carboxypeptidase CPVL (cpvl) from Dictyostelium discoideum (Social amoeba).